Consider the following 272-residue polypeptide: MGQKINPNGFRLGITTDHVSHWFADSHKEGQRYADFLKEDVKIRELMTTGMERAGISKVEIERTRDRVRVDIHTARPGIVIGRRGAEADRIRGELEKLTGKQIQLNILEVKNPETDAQLVAQGVAEQLASRVAFRRAMKKAIQSAMRAGAQGIRIQCSGRLGGAEMSRSEFYREGRVPLHTLRANIDFGKFEAKTTFGRIGVKVWIYKGDLTAKELAAKEAAQPSGRGRGGERRGGGERRRRNDRAERAPRQENAGAGAETPAAAPAEGGNA.

Residues 43-111 (IRELMTTGME…QIQLNILEVK (69 aa)) form the KH type-2 domain. Residues 218-272 (AKEAAQPSGRGRGGERRGGGERRRRNDRAERAPRQENAGAGAETPAAAPAEGGNA) are disordered. Residues 229-238 (RGGERRGGGE) show a composition bias toward basic and acidic residues. Low complexity predominate over residues 253–272 (ENAGAGAETPAAAPAEGGNA).

This sequence belongs to the universal ribosomal protein uS3 family. As to quaternary structure, part of the 30S ribosomal subunit. Forms a tight complex with proteins S10 and S14.

Its function is as follows. Binds the lower part of the 30S subunit head. Binds mRNA in the 70S ribosome, positioning it for translation. This Micrococcus luteus (strain ATCC 4698 / DSM 20030 / JCM 1464 / CCM 169 / CCUG 5858 / IAM 1056 / NBRC 3333 / NCIMB 9278 / NCTC 2665 / VKM Ac-2230) (Micrococcus lysodeikticus) protein is Small ribosomal subunit protein uS3.